The primary structure comprises 192 residues: Late embryogenesis abundant protein 47 (192 aa).

Positions 5–9 match the Nuclear localization signal (NLS) motif; the sequence is QLQKP. SMP domains follow at residues 68–125 and 133–190; these read ITIG…LNAR and TTLA…RINQ. The tract at residues 146–174 is disordered; that stretch reads LPSDKAATRKDAEGVTGAEMRNDPHLTTY. Over residues 147-158 the composition is skewed to basic and acidic residues; sequence PSDKAATRKDAE.

The protein belongs to the LEA type SMP family.

It is found in the cytoplasm. It localises to the nucleus. Its function is as follows. LEA proteins are late embryonic proteins abundant in higher plant seed embryos. The function of those proteins is not known. The chain is Late embryogenesis abundant protein 47 from Arabidopsis thaliana (Mouse-ear cress).